Reading from the N-terminus, the 155-residue chain is Ribonuclease H (155 aa).

Residues 1–142 (MLKQVEIFTD…CDELARAAAM (142 aa)) enclose the RNase H type-1 domain. Residues Asp10, Glu48, Asp70, and Asp134 each coordinate Mg(2+).

This sequence belongs to the RNase H family. Monomer. Mg(2+) serves as cofactor.

The protein localises to the cytoplasm. It carries out the reaction Endonucleolytic cleavage to 5'-phosphomonoester.. Its function is as follows. Endonuclease that specifically degrades the RNA of RNA-DNA hybrids. This is Ribonuclease H from Escherichia coli (strain 55989 / EAEC).